Here is a 358-residue protein sequence, read N- to C-terminus: MIIKPIASPARYFLRTPSWSAVAIFQAVKIKPLQLRTNSSNSVTPNLISPSKKSWKDLFSKRWQYYAEISRAGSPTGTYLLYSPCTWSILMAAYAYDSSLVNVTKMLALFGVGSFLMRSAGCVINDLWDRELDAKVERSKSRPLASGKLSVRQAISLLSVQLTASLGILLQLNPYTIKLGVASLVPVCIYPAMKRITYYPQVVLGLTFGYGAVMGWPALAGEACMNWSVVAPLYLSTISWIVLYDTIYAHQDKRDDVKANIYSTALRFGDNTKPVLCGLAALQIATLATAGIMNGQGPVFYTLGVAGAAYRLSSMIYKVDLDDPKDCFRWFKRNSNTGYLVAAAIALDWLAKSFIYDS.

A mitochondrion-targeting transit peptide spans 1 to 20 (MIIKPIASPARYFLRTPSWS). 7 helical membrane passes run 76 to 96 (TGTY…AYAY), 107 to 127 (LALF…INDL), 154 to 174 (AISL…QLNP), 202 to 222 (VVLG…LAGE), 229 to 249 (VVAP…TIYA), 275 to 295 (VLCG…IMNG), and 336 to 356 (NTGY…SFIY).

The protein belongs to the UbiA prenyltransferase family. The cofactor is Mg(2+).

The protein resides in the mitochondrion. Its subcellular location is the mitochondrion inner membrane. The enzyme catalyses an all-trans-polyprenyl diphosphate + 4-hydroxybenzoate = a 4-hydroxy-3-(all-trans-polyprenyl)benzoate + diphosphate. Its pathway is cofactor biosynthesis; ubiquinone biosynthesis. Functionally, catalyzes the prenylation of para-hydroxybenzoate (PHB) with an all-trans polyprenyl group. Mediates the second step in the final reaction sequence of coenzyme Q (CoQ) biosynthesis, which is the condensation of the polyisoprenoid side chain with PHB, generating the first membrane-bound Q intermediate. The sequence is that of 4-hydroxybenzoate polyprenyltransferase, mitochondrial from Schizosaccharomyces pombe (strain 972 / ATCC 24843) (Fission yeast).